The sequence spans 840 residues: Wings apart-like protein 2 (840 aa).

3 disordered regions span residues 1–37, 56–78, and 532–594; these read MMER…EPVD, SDND…FGSN, and FDLE…DHHV. Basic residues predominate over residues 546–557; that stretch reads KQKKSKGQKRKG. Residues 558 to 567 are compositionally biased toward basic and acidic residues; sequence SYRDKKDERS. Polar residues predominate over residues 569–585; the sequence is QLFSSQEESNHGLNSQE. Residues 764-819 form the WAPL domain; the sequence is KEAEKMIVEAYSALLLAFLSTESRSIRNAIRDYLPKRDMAILVPVLDRFVAFHTTL.

It belongs to the WAPL family. Interacts with the cohesin complex throughout the cell cycle. In terms of tissue distribution, expressed in roots, leaves, buds and siliques.

Its subcellular location is the nucleus. It is found in the chromosome. Regulator of sister chromatid cohesion in meiosis which negatively regulates cohesin association with chromatin, acting as an antagonist of CTF7. Cohesion ensures that chromosome partitioning is accurate in both meiotic and mitotic cells and plays an important role in DNA repair. Essential for the prophase removal of cohesin during meiosis thus determining the timely release of meiotic cohesion. Important for proper spindle attachment and assembly during meiosis. Helps to prevent abnormal centromere association during prophase I in meiocytes. Required for early embryonic patterning. Also involved in chromosome segregation during mitosis. This is Wings apart-like protein 2 from Arabidopsis thaliana (Mouse-ear cress).